The sequence spans 204 residues: ATP phosphoribosyltransferase (204 aa).

Belongs to the ATP phosphoribosyltransferase family. Short subfamily. In terms of assembly, heteromultimer composed of HisG and HisZ subunits.

It localises to the cytoplasm. The enzyme catalyses 1-(5-phospho-beta-D-ribosyl)-ATP + diphosphate = 5-phospho-alpha-D-ribose 1-diphosphate + ATP. It participates in amino-acid biosynthesis; L-histidine biosynthesis; L-histidine from 5-phospho-alpha-D-ribose 1-diphosphate: step 1/9. Catalyzes the condensation of ATP and 5-phosphoribose 1-diphosphate to form N'-(5'-phosphoribosyl)-ATP (PR-ATP). Has a crucial role in the pathway because the rate of histidine biosynthesis seems to be controlled primarily by regulation of HisG enzymatic activity. In Staphylococcus aureus (strain bovine RF122 / ET3-1), this protein is ATP phosphoribosyltransferase.